A 352-amino-acid chain; its full sequence is Threonine synthase (352 aa).

Lys59 carries the N6-(pyridoxal phosphate)lysine modification. Pyridoxal 5'-phosphate-binding positions include Asn85, 185–189 (GNAGN), and Thr314.

It belongs to the threonine synthase family. It depends on pyridoxal 5'-phosphate as a cofactor.

It catalyses the reaction O-phospho-L-homoserine + H2O = L-threonine + phosphate. The protein operates within amino-acid biosynthesis; L-threonine biosynthesis; L-threonine from L-aspartate: step 5/5. Catalyzes the gamma-elimination of phosphate from L-phosphohomoserine and the beta-addition of water to produce L-threonine. The polypeptide is Threonine synthase (thrC) (Bacillus subtilis (strain 168)).